Consider the following 232-residue polypeptide: Clarin-1 (232 aa).

Residues 8–28 form a helical membrane-spanning segment; sequence IIFCMAGVFSFACALGVVTAL. Residue Asn48 is glycosylated (N-linked (GlcNAc...) asparagine). A run of 3 helical transmembrane segments spans residues 101 to 121, 135 to 155, and 186 to 206; these read VILF…FFMY, LGLY…MILF, and TTSF…GLLI.

The protein belongs to the clarin family. Widely expressed. Found in the retina.

It localises to the cell membrane. In terms of biological role, may have a role in the excitatory ribbon synapse junctions between hair cells and cochlear ganglion cells and presumably also in analogous synapses within the retina. The chain is Clarin-1 (CLRN1) from Homo sapiens (Human).